Here is a 165-residue protein sequence, read N- to C-terminus: Phosphopantetheine adenylyltransferase (165 aa).

Serine 11 is a substrate binding site. Residues 11-12 (SF) and histidine 19 each bind ATP. Substrate contacts are provided by lysine 43, threonine 76, and arginine 90. Residues 91–93 (GIR), glutamate 101, and 126–132 (FSFISSS) contribute to the ATP site.

It belongs to the bacterial CoaD family. In terms of assembly, homohexamer. The cofactor is Mg(2+).

It is found in the cytoplasm. The catalysed reaction is (R)-4'-phosphopantetheine + ATP + H(+) = 3'-dephospho-CoA + diphosphate. It functions in the pathway cofactor biosynthesis; coenzyme A biosynthesis; CoA from (R)-pantothenate: step 4/5. Its function is as follows. Reversibly transfers an adenylyl group from ATP to 4'-phosphopantetheine, yielding dephospho-CoA (dPCoA) and pyrophosphate. The chain is Phosphopantetheine adenylyltransferase from Latilactobacillus sakei subsp. sakei (strain 23K) (Lactobacillus sakei subsp. sakei).